We begin with the raw amino-acid sequence, 182 residues long: Large ribosomal subunit protein uL10 (182 aa).

Belongs to the universal ribosomal protein uL10 family. Part of the ribosomal stalk of the 50S ribosomal subunit. The N-terminus interacts with L11 and the large rRNA to form the base of the stalk. The C-terminus forms an elongated spine to which L12 dimers bind in a sequential fashion forming a multimeric L10(L12)X complex.

Forms part of the ribosomal stalk, playing a central role in the interaction of the ribosome with GTP-bound translation factors. This is Large ribosomal subunit protein uL10 from Microcystis aeruginosa (strain NIES-843 / IAM M-2473).